A 178-amino-acid chain; its full sequence is 2-C-methyl-D-erythritol 2,4-cyclodiphosphate synthase (178 aa).

A divalent metal cation contacts are provided by Asp-24, His-26, and His-61. A 4-CDP-2-C-methyl-D-erythritol 2-phosphate-binding site is contributed by 24–26 (DSH). 150-153 (TSGE) is a binding site for 4-CDP-2-C-methyl-D-erythritol 2-phosphate.

It belongs to the IspF family. Homotrimer. A divalent metal cation serves as cofactor.

The enzyme catalyses 4-CDP-2-C-methyl-D-erythritol 2-phosphate = 2-C-methyl-D-erythritol 2,4-cyclic diphosphate + CMP. Its pathway is isoprenoid biosynthesis; isopentenyl diphosphate biosynthesis via DXP pathway; isopentenyl diphosphate from 1-deoxy-D-xylulose 5-phosphate: step 4/6. In terms of biological role, involved in the biosynthesis of isopentenyl diphosphate (IPP) and dimethylallyl diphosphate (DMAPP), two major building blocks of isoprenoid compounds. Catalyzes the conversion of 4-diphosphocytidyl-2-C-methyl-D-erythritol 2-phosphate (CDP-ME2P) to 2-C-methyl-D-erythritol 2,4-cyclodiphosphate (ME-CPP) with a corresponding release of cytidine 5-monophosphate (CMP). The polypeptide is 2-C-methyl-D-erythritol 2,4-cyclodiphosphate synthase (Chlamydia trachomatis serovar L2 (strain ATCC VR-902B / DSM 19102 / 434/Bu)).